Consider the following 1242-residue polypeptide: DNA polymerase catalytic subunit (1242 aa).

Disordered stretches follow at residues 14–38 (GAVAGGRRQRSQPGSAQGSGKRPPQ), 644–665 (LQSAPSSQDGVSPGSGSNSSSS), and 1109–1162 (APQG…RKPP). The segment covering 653-665 (GVSPGSGSNSSSS) has biased composition (low complexity). The segment covering 1111–1125 (QGSSDNGDSVTTGVV) has biased composition (polar residues). Basic and acidic residues predominate over residues 1145 to 1155 (ESNRRGGEPAK).

This sequence belongs to the DNA polymerase type-B family. As to quaternary structure, forms a complex with the ssDNA-binding protein UL57, the DNA polymerase processivity factor UL44, and the alkaline exonuclease UL98. Interacts with the putative helicase-primase complex composed of UL70, UL102 and UL105 proteins; these interactions may coordinate leading and lagging strand DNA synthesis at the replication fork.

It is found in the host nucleus. It carries out the reaction DNA(n) + a 2'-deoxyribonucleoside 5'-triphosphate = DNA(n+1) + diphosphate. Functionally, replicates viral genomic DNA in the late phase of lytic infection, producing long concatemeric DNA. The replication complex is composed of six viral proteins: the DNA polymerase, processivity factor, primase, primase-associated factor, helicase, and ssDNA-binding protein. The sequence is that of DNA polymerase catalytic subunit (UL54) from Homo sapiens (Human).